We begin with the raw amino-acid sequence, 314 residues long: Olfactory receptor 1E1 (314 aa).

The Extracellular segment spans residues 1–25 (MMGQNQTSISDFLLLGLPIQPEQQN). An N-linked (GlcNAc...) asparagine glycan is attached at Asn5. The helical transmembrane segment at 26–49 (LCYALFLAMYLTTLLGNLLIIVLI) threads the bilayer. The Cytoplasmic segment spans residues 50-57 (RLDSHLHT). A helical membrane pass occupies residues 58–79 (PMYLFLSNLSFSDLCFSSVTIP). The Extracellular portion of the chain corresponds to 80 to 100 (KLLQNMQNQDPSIPYADCLTQ). An intrachain disulfide couples Cys97 to Cys189. The chain crosses the membrane as a helical span at residues 101-120 (MYFFLLFGDLESFLLVAMAY). The Cytoplasmic segment spans residues 121–139 (DRYVAICFPLHYTAIMSPM). A helical membrane pass occupies residues 140–158 (LCLSVVALSWVLTTFHAML). Over 159–195 (HTLLMARLCFCADNVIPHFFCDMSALLKLACSDTRVN) the chain is Extracellular. Residues 196–219 (EWVIFIMGGLILVIPFLLILGSYA) traverse the membrane as a helical segment. Residues 220-236 (RIVSSILKVPSSKGICK) lie on the Cytoplasmic side of the membrane. Residues 237–259 (ALSTCGSHLSVVSLFYGTVIGLY) traverse the membrane as a helical segment. The Extracellular segment spans residues 260–272 (LCPSANSSTLKDT). Residues 273–292 (VMAMIYTVVTPMLNPFIYSL) form a helical membrane-spanning segment. Topologically, residues 293–314 (RNRDMKGALSRVIHQKKTFFSL) are cytoplasmic.

This sequence belongs to the G-protein coupled receptor 1 family.

Its subcellular location is the cell membrane. In terms of biological role, odorant receptor. The protein is Olfactory receptor 1E1 (OR1E1) of Pan troglodytes (Chimpanzee).